Consider the following 100-residue polypeptide: MTPWYLYLIRTADNALYTGITTDVARRYRQHQTGKGAKALRGKGELTLAFAAQVGDRSLALRIEYRIKQLTKRQKERLVTEQEAFESLLSSLQTPVLKND.

The region spanning 2–77 (TPWYLYLIRT…KQLTKRQKER (76 aa)) is the GIY-YIG domain.

Belongs to the UPF0213 family.

This chain is UPF0213 protein YhbQ, found in Salmonella arizonae (strain ATCC BAA-731 / CDC346-86 / RSK2980).